The primary structure comprises 633 residues: Probable extracellular metalloproteinase 3 (633 aa).

An N-terminal signal peptide occupies residues 1–18 (MHGLLLAGLLALPMNVLA). A propeptide spanning residues 19-246 (HPAEQHASNV…VHNVVDYVAS (228 aa)) is cleaved from the precursor. Residue asparagine 410 is glycosylated (N-linked (GlcNAc...) asparagine). Residue histidine 429 coordinates Zn(2+). Glutamate 430 is a catalytic residue. Zn(2+) is bound at residue histidine 433. N-linked (GlcNAc...) asparagine glycosylation is found at asparagine 480 and asparagine 622.

The protein belongs to the peptidase M36 family. The cofactor is Zn(2+).

Its subcellular location is the secreted. Functionally, secreted metalloproteinase probably acting as a virulence factor. This chain is Probable extracellular metalloproteinase 3 (MEP3), found in Trichophyton verrucosum (strain HKI 0517).